Here is a 270-residue protein sequence, read N- to C-terminus: tRNA pseudouridine synthase A (270 aa).

Asp60 (nucleophile) is an active-site residue. Positions 107–111 (FHARF) are RNA binding. Tyr118 contacts substrate. Residues 168–172 (QCQSR) are interaction with tRNA.

Belongs to the tRNA pseudouridine synthase TruA family. In terms of assembly, homodimer.

The catalysed reaction is uridine(38/39/40) in tRNA = pseudouridine(38/39/40) in tRNA. In terms of biological role, formation of pseudouridine at positions 38, 39 and 40 in the anticodon stem and loop of transfer RNAs. The protein is tRNA pseudouridine synthase A of Shigella sonnei (strain Ss046).